A 687-amino-acid chain; its full sequence is Adhesion G-protein coupled receptor G1 (687 aa).

The N-terminal stretch at 1–25 (MTAQSLLQTTLFLLSLLFLVQGAHG) is a signal peptide. 26–33 (RGHREDFR) serves as a coordination point for heparin. Residues 26–402 (RGHREDFRFC…VEVDAVHKHY (377 aa)) are Extracellular-facing. 2 disulfides stabilise this stretch: Cys35–Cys91 and Cys121–Cys177. 4 N-linked (GlcNAc...) asparagine glycosylation sites follow: Asn39, Asn148, Asn156, and Asn171. Residue 190 to 200 (LKHPQKASRRP) coordinates heparin. Positions 224–395 (DTVSFEEDRV…AVLMVSSVEV (172 aa)) constitute a GAIN-B domain. N-linked (GlcNAc...) asparagine glycosylation is found at Asn234, Asn303, Asn324, and Asn341. 2 cysteine pairs are disulfide-bonded: Cys346–Cys377 and Cys366–Cys379. The tract at residues 346–395 (CVFWVEDPTLSNPGRWSSAGCETVRRETQTSCFCNHLTYFAVLMVSSVEV) is GPS. The interval 384-397 (YFAVLMVSSVEVDA) is stachel. The chain crosses the membrane as a helical span at residues 403–423 (LSLLSYVGCVVSALACVVTIA). At 424-442 (AYLCSRRKPRDYTIKVHMN) the chain is on the cytoplasmic side. A helical membrane pass occupies residues 443–463 (LLLAVFLLDVSFLLSEPVALT). The Extracellular segment spans residues 464-470 (GSQSGCR). A helical membrane pass occupies residues 471–491 (ASAIFLHFSLLACLSWMGLEG). Over 492–512 (YNLYRLVVEVFGTYIPGYLLK) the chain is Cytoplasmic. A helical transmembrane segment spans residues 513-533 (LSAMGWGFPIFLVTLVALVDV). Residues 534–570 (DNYGPIILAVHRTPESVIYPSMCWIRDSLVSYITNLG) are Extracellular-facing. The helical transmembrane segment at 571 to 591 (LFSLVFLFNMAMLGTMVVQIL) threads the bilayer. Topologically, residues 592–603 (RLRPHTQKWSHV) are cytoplasmic. The chain crosses the membrane as a helical span at residues 604–624 (LTLLGLSLVLGLPWALIFFSF). Residues 625–630 (ASGTFQ) lie on the Extracellular side of the membrane. The helical transmembrane segment at 631–651 (LVVLYLFSIITSFQGFLIFLW) threads the bilayer. Topologically, residues 652 to 687 (YWSMRLQARGGPSPLKSNSDSARLPISTGSTSSSRI) are cytoplasmic. A disordered region spans residues 664-687 (SPLKSNSDSARLPISTGSTSSSRI). Residues 666–687 (LKSNSDSARLPISTGSTSSSRI) are compositionally biased toward polar residues.

This sequence belongs to the G-protein coupled receptor 2 family. LN-TM7 subfamily. Heterodimer of 2 chains generated by proteolytic processing; the large extracellular N-terminal fragment (ADGRG1 NT) and the membrane-bound C-terminal fragment (ADGRG1-CT) predominantly remain associated and non-covalently linked. ADGRG1 NT self-associates in a trans-trans manner; the homophilic interaction enhances receptor signaling. Interacts with TGM2. Interacts with heparin; leading to the reduction of ADGRG1 shedding. Interacts with COL3A1. Part of a GPCR-tetraspanin complex at least consisting of ADGRG1, CD81, eventually CD9, and GNA11 in which CD81 is enhancing the association of ADGRG1 with GNA11. Autoproteolytically cleaved into 2 fragments; the large extracellular N-terminal fragment (ADGRG1 NT) and the membrane-bound C-terminal fragment (ADGRG1 CT) predominantly remain associated and non-covalently linked. Shedding to yield the secreted ADGRG1 N-terminal fragment seems to involve metalloprotease(s). Post-translationally, ubiquitinated. Undergoes polyubiquitination upon activation.

It localises to the cell membrane. The protein resides in the secreted. The protein localises to the membrane raft. Its activity is regulated as follows. Forms a heterodimer of 2 chains generated by proteolytic processing that remain associated through non-covalent interactions mediated by the GAIN-B domain. In the inactivated receptor, the Stachel sequence (also named stalk) is embedded in the GAIN-B domain, where it adopts a beta-strand conformation. On activation, the Stachel moves into the 7 transmembrane region and adopts a twisted hook-shaped configuration that forms contacts within the receptor, leading to coupling of a G-alpha protein, which activates signaling. The cleaved GAIN-B and N-terminal domains can then dissociate from the rest of the receptor. Functionally, adhesion G-protein coupled receptor (aGPCR) for steroid hormone 17alpha-hydroxypregnenolone (17-OH), which is involved in cell adhesion and cell-cell interactions. Ligand binding causes a conformation change that triggers signaling via guanine nucleotide-binding proteins (G proteins) and modulates the activity of downstream effectors, such as RhoA pathway. ADGRG1 is coupled to G(12) and/or G(13) G proteins (GNA12 and GNA13, respectively) and mediates the activation Rho small GTPases. Acts as a potent suppressor of ferroptosis: binding to 17-OH-binding initiates signaling that down-regulates CD36 and alleviates ferroptosis-induced liver injury. Ligand-binding also induces cell adhesion activity via association with proteins such as collagen III/COL3A1 and TGM2. Mediates cell matrix adhesion in developing neurons and hematopoietic stem cells. Involved in cortical development, specifically in maintenance of the pial basement membrane integrity and in cortical lamination: association with COL3A1 in the developing brain inhibits neuronal migration via activation of the RhoA pathway. Together with TGM2, acts as a regulator of myelination and myelin repair in oligodendrocyte precursor cells. Acts as a hemostatic sensor of shear force: G protein-coupled receptor signaling is activated in response to shear force in platelets, promoting G(13) G protein signaling, and platelet shape change and aggregation in a COL3A1-dependent manner. Acts as an inhibitor of VEGFA production thereby inhibiting angiogenesis through a signaling pathway mediated by PRKCA. Plays a role in the maintenance of hematopoietic stem cells in bone marrow niche. Plays an essential role in testis development. This chain is Adhesion G-protein coupled receptor G1 (ADGRG1), found in Macaca mulatta (Rhesus macaque).